We begin with the raw amino-acid sequence, 638 residues long: 1-deoxy-D-xylulose-5-phosphate synthase (638 aa).

Residues His-72 and 113 to 115 (GHA) each bind thiamine diphosphate. Residue Asp-144 participates in Mg(2+) binding. Residues 145–146 (GA), Asn-174, Tyr-289, and Glu-372 each bind thiamine diphosphate. Asn-174 is a binding site for Mg(2+).

It belongs to the transketolase family. DXPS subfamily. In terms of assembly, homodimer. Requires Mg(2+) as cofactor. It depends on thiamine diphosphate as a cofactor.

It carries out the reaction D-glyceraldehyde 3-phosphate + pyruvate + H(+) = 1-deoxy-D-xylulose 5-phosphate + CO2. It participates in metabolic intermediate biosynthesis; 1-deoxy-D-xylulose 5-phosphate biosynthesis; 1-deoxy-D-xylulose 5-phosphate from D-glyceraldehyde 3-phosphate and pyruvate: step 1/1. Its function is as follows. Catalyzes the acyloin condensation reaction between C atoms 2 and 3 of pyruvate and glyceraldehyde 3-phosphate to yield 1-deoxy-D-xylulose-5-phosphate (DXP). This chain is 1-deoxy-D-xylulose-5-phosphate synthase, found in Gloeobacter violaceus (strain ATCC 29082 / PCC 7421).